The following is a 135-amino-acid chain: Small ribosomal subunit protein uS11 (135 aa).

Belongs to the universal ribosomal protein uS11 family. In terms of assembly, part of the 30S ribosomal subunit. Interacts with proteins S7 and S18. Binds to IF-3.

Located on the platform of the 30S subunit, it bridges several disparate RNA helices of the 16S rRNA. Forms part of the Shine-Dalgarno cleft in the 70S ribosome. This is Small ribosomal subunit protein uS11 from Polynucleobacter necessarius subsp. necessarius (strain STIR1).